Here is a 238-residue protein sequence, read N- to C-terminus: Large ribosomal subunit protein uL2 (238 aa).

A disordered region spans residues 197 to 219 (ASDHPFGGKRHSNHSKPFTVSKW).

Belongs to the universal ribosomal protein uL2 family. Part of the 50S ribosomal subunit. Forms a bridge to the 30S subunit in the 70S ribosome.

Its function is as follows. One of the primary rRNA binding proteins. Required for association of the 30S and 50S subunits to form the 70S ribosome, for tRNA binding and peptide bond formation. It has been suggested to have peptidyltransferase activity; this is somewhat controversial. Makes several contacts with the 16S rRNA in the 70S ribosome. The protein is Large ribosomal subunit protein uL2 of Nanoarchaeum equitans (strain Kin4-M).